The primary structure comprises 532 residues: Phosphoribosylamine--glycine ligase, chloroplastic (532 aa).

Residues 1–75 (MSSLCASNCY…IQRRLFLLRC (75 aa)) constitute a chloroplast transit peptide. The region spanning 204 to 412 (KNLCHKYNIP…LAKVLLAACK (209 aa)) is the ATP-grasp domain.

This sequence belongs to the GARS family.

Its subcellular location is the plastid. It localises to the chloroplast. The catalysed reaction is 5-phospho-beta-D-ribosylamine + glycine + ATP = N(1)-(5-phospho-beta-D-ribosyl)glycinamide + ADP + phosphate + H(+). It functions in the pathway purine metabolism; IMP biosynthesis via de novo pathway; N(1)-(5-phospho-D-ribosyl)glycinamide from 5-phospho-alpha-D-ribose 1-diphosphate: step 2/2. In Arabidopsis thaliana (Mouse-ear cress), this protein is Phosphoribosylamine--glycine ligase, chloroplastic (PUR2).